The following is a 217-amino-acid chain: ATP synthase subunit 4, mitochondrial (217 aa).

Residues 1 to 14 (MPFARVGALSARHY) constitute a mitochondrion transit peptide. 2 helical membrane passes run 41–61 (GVLA…LYIV) and 66–86 (IVLG…GPGY).

As to quaternary structure, F-type ATP synthases have 2 components, the catalytic core F(1) and the membrane-embedded component F(0), linked together by a central stalk and a peripheral stalk. The central stalk, also called rotor shaft, is often seen as part of F(1). The peripheral stalk is seen as part of F(0). F(0) contains the membrane channel next to the rotor. F-type ATP synthases form dimers but each monomer functions independently in ATP generation. The dimer consists of 17 different polypeptides: ATP1 (subunit alpha, 3 molecules per monomer, part of F(1)), ATP2 (subunit beta, 3 copies per monomer, part of F(1)), ATP3 (subunit gamma, part of the central stalk), ATP4 (subunit b, part of the peripheral stalk), ATP5/OSCP (subunit 5/OSCP, part of the peripheral stalk), ATP6 (subunit a, part of the peripheral stalk), ATP7 (subunit d, part of the peripheral stalk), ATP8 (subunit 8, part of the peripheral stalk), OLI1 (subunit c, part of the rotor, 10 molecules per monomer), ATP14 (subunit h, part of the peripheral stalk), ATP15 (subunit epsilon, part of the central stalk), ATP16 (subunit delta, part of the central stalk), ATP17 (subunit f, part of the peripheral stalk), ATP18 (subunit i/j, part of the peripheral stalk), ATP19 (subunit k, dimer-specific, at interface between monomers), ATP20 (subunit g, at interface between monomers), TIM11 (subunit e, at interface between monomers).

It localises to the mitochondrion inner membrane. Its function is as follows. Mitochondrial membrane ATP synthase (F(1)F(0) ATP synthase or Complex V) produces ATP from ADP in the presence of a proton gradient across the membrane which is generated by electron transport complexes of the respiratory chain. F-type ATP synthases consist of two structural domains, F(1) - containing the extramembraneous catalytic core, and F(0) - containing the membrane proton channel, linked together by a central stalk and a peripheral stalk. During catalysis, ATP synthesis in the catalytic domain of F(1) is coupled via a rotary mechanism of the central stalk subunits to proton translocation. Part of the complex F(0) domain and the peripheral stalk, which acts as a stator to hold the catalytic alpha/ATP1(3)beta/ATP2(3) subcomplex and subunit a/ATP6 static relative to the rotary elements. The chain is ATP synthase subunit 4, mitochondrial from Yarrowia lipolytica (strain CLIB 122 / E 150) (Yeast).